The primary structure comprises 171 residues: Group 1 truncated hemoglobin LI410 (171 aa).

The transit peptide at 1–23 (MMRTVQLRTLRPCIRAQQQPVRA) directs the protein to the chloroplast. Positions 63 and 111 each coordinate heme.

Belongs to the truncated hemoglobin family. Group I subfamily. The cofactor is heme.

The protein localises to the plastid. The protein resides in the chloroplast. This is Group 1 truncated hemoglobin LI410 (LI410) from Chlamydomonas moewusii (Chlamydomonas eugametos).